Consider the following 1264-residue polypeptide: MWVNPEEVLLANALWITERANPYFILQRRKGHGGDGGGGGGLAGLLVGTLDVVLDSSARVAPYRILYQTPDSLVYWTIACGGSRKEVTEHWEWLEQNLLQTLSIFENENDVTTFVRGKIQGIIAEYNKINDVKEDEDTEKFKEAIVKFHRLFGMPEEEKLVNYYSCSYWKGRVPRQGWMYLSINHLCFSSFLMGREAKLVIRWVDITQLEKNATLLLPDMIKVSTRSSEHFFSVFLNINETFKLMEQLANIAMRQLLDNEGFEQDRSLPKLKKKSPKKVSALKRDLDARAKSERYRALFRLPKDEKLDGHTDCTLWTPFNKMHILGQMFVSTNYICFTSKEENLCSLIIPLREVTIVEKADSCSVLPSPLSISTRNRMTFLFANLKDRDFLVQRISDFLQQTTSRIYSDKEFSGSCNSSDDEVYSRPSSLVSSSPQRSTSSDADGERPFNLNGNSVPTATQTLMTMYRRRSPEEFNPKLAKEFLKEQAWKIHFAEYGQGICMYRTEKTRELVLKGIPESMRGELWLLLSGAINEKATHPGYYEGLVEKSMGKYNLATEEIERDLHRSLPEHPAFQNEMGIAALRRVLTAYAFRNPNIGYCQAMNIVTSVLLLYAKEEEAFWLLVALCERMLPDYYNTRVVGALVDQGVFEELARDYVPQLYDCMQDLGVISTISLSWFLTLFLSVMPFESAVVVVDCFFYEGIKVIFQLALAVLDANVDKLLNCKDDGEAMTVLGRYLDSVTNKDSTLPPIPHLHSLLSDDVGPYPAVDIFRLIGTSYEKFGTIRADLIEQMRFKQRLKVIQTLEDTTKRNVVRTIVTETSFTIDELEELYALFKAEHLTSCYWGGSSNALDRHDPSLPYLEQYRIDFEQFKGMFVLLFPWACGTHSDVLASRLFQLLDENGDSLINFREFVSGLSAACHGDLTEKLKLLYKMHVLPEPSCDQDEPDSAFEATQYFFEDITPECTHVVGLDSRGKQSADDGFVTVSLKQDRGKRANSQENRNYLKLWTAENKSKSKTAKDLPKLNQGQFIELCKTMYNMFSEDPNEQELYHATAAVTSLLLEIGEVGKFFITQPAKEDAVPGPPCGQAIPGMLFPKKGSSQSYVVESTEPLTASLAVDSEEHSLGGQMEDIKLEDSSPRDNGACSSMLISDDDTKDDSSMSSYSVLSAGSHEEDKLHCEDIGEDTVLVRSSQGRATLPRSSSLDRDWAITFEQFLASLLTEPALVRYFDKPVCMMARVTSAKNIRMMGKPLTSASDYEISALSG.

GRAM domains follow at residues 146-213 and 293-361; these read VKFH…EKNA and ERYR…EKAD. The tract at residues 410 to 456 is disordered; the sequence is KEFSGSCNSSDDEVYSRPSSLVSSSPQRSTSSDADGERPFNLNGNSV. Residues 425–441 show a composition bias toward low complexity; it reads SRPSSLVSSSPQRSTSS. Positions 515–702 constitute a Rab-GAP TBC domain; the sequence is GIPESMRGEL…VVVDCFFYEG (188 aa). The EF-hand domain maps to 886–921; it reads HSDVLASRLFQLLDENGDSLINFREFVSGLSAACHG. Positions 1119-1138 are enriched in basic and acidic residues; it reads SEEHSLGGQMEDIKLEDSSP. Residues 1119 to 1162 form a disordered region; sequence SEEHSLGGQMEDIKLEDSSPRDNGACSSMLISDDDTKDDSSMSS.

Functionally, may act as a GTPase-activating protein for Rab family protein(s). The polypeptide is TBC1 domain family member 9 (Tbc1d9) (Mus musculus (Mouse)).